The chain runs to 409 residues: Elongation factor Tu, plastid (409 aa).

In terms of domain architecture, tr-type G spans 10–214 (KPHINIGTIG…SVDSYIPTPV (205 aa)). The interval 19 to 26 (GHVDHGKT) is G1. 19-26 (GHVDHGKT) is a binding site for GTP. Thr26 lines the Mg(2+) pocket. The tract at residues 60–64 (GITIN) is G2. A G3 region spans residues 81–84 (DCPG). GTP contacts are provided by residues 81–85 (DCPGH) and 136–139 (NKED). Residues 136 to 139 (NKED) are G4. Positions 174 to 176 (SAL) are G5.

It belongs to the TRAFAC class translation factor GTPase superfamily. Classic translation factor GTPase family. EF-Tu/EF-1A subfamily.

The protein localises to the plastid. It carries out the reaction GTP + H2O = GDP + phosphate + H(+). Functionally, GTP hydrolase that promotes the GTP-dependent binding of aminoacyl-tRNA to the A-site of ribosomes during protein biosynthesis. This is Elongation factor Tu, plastid (tufA) from Helicosporidium sp. subsp. Simulium jonesii (Green alga).